Consider the following 755-residue polypeptide: Glucosylglycerol-phosphate synthase (755 aa).

It belongs to the glycosyltransferase 20 family.

It carries out the reaction ADP-alpha-D-glucose + sn-glycerol 3-phosphate = 2-O-(alpha-D-glucopyranosyl)-sn-glycerol 3-phosphate + ADP + H(+). It participates in glycan metabolism; glucosylglycerol biosynthesis. In terms of biological role, involved in salt tolerance by producing GG-phosphate from ADP-glucose and glycerol-3-phosphate (G3P), an intermediate in the synthesis of the osmolyte glucosylglycerol (GG). This is Glucosylglycerol-phosphate synthase (ggpS) from Pseudomonas anguilliseptica.